Consider the following 291-residue polypeptide: 4-diphosphocytidyl-2-C-methyl-D-erythritol kinase (291 aa).

Residue K10 is part of the active site. Residue 94-104 (PVSAGLAGGSS) coordinates ATP. D136 is a catalytic residue.

The protein belongs to the GHMP kinase family. IspE subfamily.

The enzyme catalyses 4-CDP-2-C-methyl-D-erythritol + ATP = 4-CDP-2-C-methyl-D-erythritol 2-phosphate + ADP + H(+). The protein operates within isoprenoid biosynthesis; isopentenyl diphosphate biosynthesis via DXP pathway; isopentenyl diphosphate from 1-deoxy-D-xylulose 5-phosphate: step 3/6. Catalyzes the phosphorylation of the position 2 hydroxy group of 4-diphosphocytidyl-2C-methyl-D-erythritol. In Listeria innocua serovar 6a (strain ATCC BAA-680 / CLIP 11262), this protein is 4-diphosphocytidyl-2-C-methyl-D-erythritol kinase.